Consider the following 553-residue polypeptide: Undecaprenyl phosphate-alpha-4-amino-4-deoxy-L-arabinose arabinosyl transferase 2 (553 aa).

A run of 12 helical transmembrane segments spans residues 6–26 (ASKI…LFPL), 85–105 (FAVR…IYLL), 115–135 (VAFV…VGTY), 137–157 (VLDP…FWAL), 178–198 (MAFM…MIPV), 208–228 (MLLY…PWVL), 261–281 (FWYY…LLPG), 295–315 (ELFF…IAKG), 317–337 (LPTY…KYGV), 352–372 (GYIN…IQLV), 386–406 (WVLA…CSTL), and 410–430 (HWLW…QAIP).

The protein belongs to the glycosyltransferase 83 family.

Its subcellular location is the cell inner membrane. It catalyses the reaction 4-amino-4-deoxy-alpha-L-arabinopyranosyl di-trans,octa-cis-undecaprenyl phosphate + lipid IVA = lipid IIA + di-trans,octa-cis-undecaprenyl phosphate.. It functions in the pathway lipopolysaccharide metabolism; 4-amino-4-deoxy-beta-L-arabinose-lipid A biosynthesis. Its function is as follows. Catalyzes the transfer of the L-Ara4N moiety of the glycolipid undecaprenyl phosphate-alpha-L-Ara4N to lipid A. The modified arabinose is attached to lipid A and is required for resistance to polymyxin and cationic antimicrobial peptides. The sequence is that of Undecaprenyl phosphate-alpha-4-amino-4-deoxy-L-arabinose arabinosyl transferase 2 from Proteus mirabilis (strain HI4320).